The chain runs to 856 residues: Facilitated trehalose transporter Tret1 (856 aa).

Disordered regions lie at residues 1 to 29 (MSGR…LKEK) and 62 to 202 (DPFL…KATS). The Cytoplasmic segment spans residues 1-389 (MSGRDNRGAG…LEVYRPTTNP (389 aa)). Positions 69-80 (VSPQRHPQTVRT) are enriched in polar residues. Over residues 133-142 (EIREHRDRQQ) the composition is skewed to basic and acidic residues. Over residues 170–180 (GNSNTNSNKAA) the composition is skewed to polar residues. Phosphoserine occurs at positions 247, 248, 249, 319, and 321. Residues 326-345 (LTSRQHFQQQRSISTDSRKS) form a disordered region. Residues 329–340 (RQHFQQQRSIST) are compositionally biased toward polar residues. The helical transmembrane segment at 390–410 (IFIWTQVIAALSVSLGSLVVG) threads the bilayer. At 411-439 (FVSAYTSPALVSMSDPNITSFTVTKDAGS) the chain is on the extracellular side. The N-linked (GlcNAc...) asparagine glycan is linked to Asn-427. Residues 440 to 460 (WVGGIMPLAGLVGGVAGGPLI) form a helical membrane-spanning segment. The Cytoplasmic segment spans residues 461-472 (EYMGRRNTILAT). Residues 473–493 (AVPFIVSSLLIACAVNVAMVL) traverse the membrane as a helical segment. Over 494–496 (CGR) the chain is Extracellular. Residues 497 to 517 (FLAGFCVGIASLSLPVYLGET) traverse the membrane as a helical segment. The Cytoplasmic portion of the chain corresponds to 518–527 (VQPEVRGTLG). The helical transmembrane segment at 528–548 (LLPTAFGNIGILVCFVAGSFM) threads the bilayer. Asn-549 is a glycosylation site (N-linked (GlcNAc...) asparagine). The Extracellular segment spans residues 549–551 (NWS). The chain crosses the membrane as a helical span at residues 552–572 (MLAFLGAALPVPFLILMFLIP). Residues 573-635 (ETPRWYVSRG…ELLKRNNLKP (63 aa)) are Cytoplasmic-facing. A helical transmembrane segment spans residues 636 to 656 (LSISLGLMFFQQFSGINAVIF). Residues 657–672 (YTVQIFKDAGSTIDGN) lie on the Extracellular side of the membrane. Residues 673-693 (VCTIIVGVVNFVATFIGILLI) form a helical membrane-spanning segment. Residues 694 to 699 (DRAGRK) lie on the Cytoplasmic side of the membrane. Residues 700-720 (ILLYASDIAMVLTLFVLGGFF) traverse the membrane as a helical segment. Residues 721–739 (YCKAHGPDVSHLGWLPLTC) lie on the Extracellular side of the membrane. A helical transmembrane segment spans residues 740 to 760 (FVVYILGFSVGFGPIPWLMMG). The Cytoplasmic segment spans residues 761–766 (EILPAK). Residues 767–787 (IRGAAASVATSFNWTCTFVVT) traverse the membrane as a helical segment. The Extracellular portion of the chain corresponds to 788–800 (KTFQDLVGSLGAH). The chain crosses the membrane as a helical span at residues 801–821 (GAFWLFGAICFVGLFFVILYV). Residues 822–856 (PETQGKTLEDIERKMMGRVRRMSSVANIKPLSFNM) are Cytoplasmic-facing. Phosphoserine occurs at positions 844 and 845.

It belongs to the major facilitator superfamily. Sugar transporter (TC 2.A.1.1) family. Trehalose transporter subfamily.

It localises to the cell membrane. In terms of biological role, low-capacity facilitative transporter for trehalose. Does not transport maltose, sucrose or lactose. Mediates the bidirectional transfer of trehalose. Responsible for the transport of trehalose synthesized in the fat body and the incorporation of trehalose into other tissues that require a carbon source, thereby regulating trehalose levels in the hemolymph. In Drosophila yakuba (Fruit fly), this protein is Facilitated trehalose transporter Tret1.